The primary structure comprises 355 residues: MTTLTVKLGERSYPIFIQPSLLTQGNQLADYIKTDKAVLVTNDLVDPLYSQTVIDSLPSIKIEKIVIADGEQHKNLASFEHVITQLLSMSAARDTTLIALGGGVIGDLTGFVAASFQRGMPFIQIPTTLLSQVDSSVGGKTAVNHPLGKNMIGAFYQPKAVFIDTKTLQTLPAKEFSAGMAEVIKYGIIYDKAFFAWLEQNIAQLIAQDVDALQYSIARCCEIKAEIVAIDERESGLRALLNLGHTFGHAIEAEQGYGNWLHGEAVAAGMVLAAKAGQMKGWMSKEEVQRVIALIEAFSLPIAPPANMGYQTFMQHMAHDKKVQAGKLNFIVPKAIGDAVVTSELDETLLRSLLD.

NAD(+) is bound by residues 69–74 (DGEQHK), 103–107 (GVIGD), 127–128 (TT), K140, K149, and 167–170 (TLQT). 3 residues coordinate Zn(2+): E182, H245, and H262.

This sequence belongs to the sugar phosphate cyclases superfamily. Dehydroquinate synthase family. Requires Co(2+) as cofactor. It depends on Zn(2+) as a cofactor. NAD(+) serves as cofactor.

The protein resides in the cytoplasm. It catalyses the reaction 7-phospho-2-dehydro-3-deoxy-D-arabino-heptonate = 3-dehydroquinate + phosphate. The protein operates within metabolic intermediate biosynthesis; chorismate biosynthesis; chorismate from D-erythrose 4-phosphate and phosphoenolpyruvate: step 2/7. Functionally, catalyzes the conversion of 3-deoxy-D-arabino-heptulosonate 7-phosphate (DAHP) to dehydroquinate (DHQ). The protein is 3-dehydroquinate synthase of Pseudoalteromonas atlantica (strain T6c / ATCC BAA-1087).